Reading from the N-terminus, the 108-residue chain is Large ribosomal subunit protein uL24 (108 aa).

The protein belongs to the universal ribosomal protein uL24 family. In terms of assembly, part of the 50S ribosomal subunit.

Its function is as follows. One of two assembly initiator proteins, it binds directly to the 5'-end of the 23S rRNA, where it nucleates assembly of the 50S subunit. One of the proteins that surrounds the polypeptide exit tunnel on the outside of the subunit. The chain is Large ribosomal subunit protein uL24 from Salinispora tropica (strain ATCC BAA-916 / DSM 44818 / JCM 13857 / NBRC 105044 / CNB-440).